A 178-amino-acid polypeptide reads, in one-letter code: Gluconokinase (178 aa).

19–26 (GVSGTGKT) is a binding site for ATP.

This sequence belongs to the gluconokinase GntK/GntV family. In terms of assembly, monomer.

It carries out the reaction D-gluconate + ATP = 6-phospho-D-gluconate + ADP + H(+). It functions in the pathway carbohydrate acid metabolism; D-gluconate degradation. Its activity is regulated as follows. Activated by magnesium. In terms of biological role, phosphorylates gluconate to 6-phosphogluconate. The protein is Gluconokinase of Gluconobacter oxydans (strain 621H) (Gluconobacter suboxydans).